We begin with the raw amino-acid sequence, 208 residues long: MKIIEIRHPLVQHKLGLMRINDISTKRFRELSSELSSLLTYVATDDLEIETVIIKGWNGLVKIARIKGKKITVVPILRAGLGMMDGVLEHVPSARISMIGVYRDEITLEPIPYFHKLVSRINERMAMVLDPMLATGGTVIATVDLLKKAGCHNIKILSLVAAPEGIAALEKKHPDVELYLASIDQKLNKYGYIIPGLGDAGDKIFGTK.

Residues Arg-78, Arg-103, and 130–138 (DPMLATGGT) each bind 5-phospho-alpha-D-ribose 1-diphosphate. Uracil-binding positions include Ile-193 and 198 to 200 (GDA). Position 199 (Asp-199) interacts with 5-phospho-alpha-D-ribose 1-diphosphate.

The protein belongs to the UPRTase family. Mg(2+) serves as cofactor.

It carries out the reaction UMP + diphosphate = 5-phospho-alpha-D-ribose 1-diphosphate + uracil. Its pathway is pyrimidine metabolism; UMP biosynthesis via salvage pathway; UMP from uracil: step 1/1. With respect to regulation, allosterically activated by GTP. Catalyzes the conversion of uracil and 5-phospho-alpha-D-ribose 1-diphosphate (PRPP) to UMP and diphosphate. The polypeptide is Uracil phosphoribosyltransferase (Blochmanniella floridana).